Consider the following 74-residue polypeptide: MFEKVRKIIAEQLGIEEDEITMESSFIDDLGADSLDIVELIMALEEEFDLEIPDSEAEKITTVGDVVEYIKNNS.

A Carrier domain is found at methionine 1–serine 74. Position 34 is an O-(pantetheine 4'-phosphoryl)serine (serine 34).

Belongs to the acyl carrier protein (ACP) family. 4'-phosphopantetheine is transferred from CoA to a specific serine of apo-ACP by AcpS. This modification is essential for activity because fatty acids are bound in thioester linkage to the sulfhydryl of the prosthetic group.

Its subcellular location is the cytoplasm. The protein operates within lipid metabolism; fatty acid biosynthesis. Its function is as follows. Carrier of the growing fatty acid chain in fatty acid biosynthesis. This is Acyl carrier protein from Acetivibrio thermocellus (strain ATCC 27405 / DSM 1237 / JCM 9322 / NBRC 103400 / NCIMB 10682 / NRRL B-4536 / VPI 7372) (Clostridium thermocellum).